A 367-amino-acid chain; its full sequence is Histone RNA hairpin-binding protein (367 aa).

A compositionally biased stretch (polar residues) spans 1–12 (MAQKTPTKGTRS). Disordered regions lie at residues 1-24 (MAQKTPTKGTRSSPRKKAWGSPIK) and 49-200 (EVTE…HWEE). Residues 57-73 (LASRLEEERRCKSESRR) show a composition bias toward basic and acidic residues. Residues 147–156 (SNASTINEGA) show a composition bias toward polar residues. Residues 183–192 (SDSSSVASSP) are compositionally biased toward low complexity. An RNA-binding region spans residues 206-275 (CTDEAVLKRR…KWKRSLYEYC (70 aa)). The tract at residues 342-367 (MDESTLKASTNTDPSAPTDFSKMSSH) is disordered. Over residues 347-356 (LKASTNTDPS) the composition is skewed to polar residues.

The protein belongs to the SLBP family. Ubiquitinated by the CBC(fem-1) (Cul2-ElonginB-ElonginC) E3 ubiquitin-protein ligase complex, leading to its degradation.

Its function is as follows. Involved in histone pre-mRNA 3' processing. Required for chromosome condensation, progression of cell death and morphogenesis. The polypeptide is Histone RNA hairpin-binding protein (cdl-1) (Caenorhabditis elegans).